We begin with the raw amino-acid sequence, 248 residues long: Triosephosphate isomerase (248 aa).

A substrate-binding site is contributed by 11–13; sequence NWK. Catalysis depends on His95, which acts as the Electrophile. Residue Glu167 is the Proton acceptor of the active site. Residues Gly173, Ser212, and 233–234 each bind substrate; that span reads GG.

Belongs to the triosephosphate isomerase family. In terms of assembly, homodimer.

It is found in the cytoplasm. It catalyses the reaction D-glyceraldehyde 3-phosphate = dihydroxyacetone phosphate. The protein operates within carbohydrate biosynthesis; gluconeogenesis. It functions in the pathway carbohydrate degradation; glycolysis; D-glyceraldehyde 3-phosphate from glycerone phosphate: step 1/1. Involved in the gluconeogenesis. Catalyzes stereospecifically the conversion of dihydroxyacetone phosphate (DHAP) to D-glyceraldehyde-3-phosphate (G3P). The sequence is that of Triosephosphate isomerase from Ralstonia nicotianae (strain ATCC BAA-1114 / GMI1000) (Ralstonia solanacearum).